The following is a 420-amino-acid chain: Riboflavin biosynthesis protein RibBA (420 aa).

Residues 1–202 form a DHBP synthase region; the sequence is MTTFGTIEQA…IADLVAYRRR (202 aa). D-ribulose 5-phosphate is bound by residues 28–29, Asp33, 141–145, and Glu165; these read RE and RPGHT. Glu29 provides a ligand contact to Mg(2+). Residue His144 coordinates Mg(2+). Positions 203–420 are GTP cyclohydrolase II; sequence TEKQVELVAE…RAVVGDGIGA (218 aa). 253 to 257 is a GTP binding site; the sequence is RVHSE. Zn(2+)-binding residues include Cys258, Cys269, and Cys271. Residues Gln274, 297 to 299, and Thr319 each bind GTP; that span reads EGR. Asp331 functions as the Proton acceptor; for GTP cyclohydrolase activity in the catalytic mechanism. Arg333 (nucleophile; for GTP cyclohydrolase activity) is an active-site residue. 2 residues coordinate GTP: Thr354 and Lys359.

The protein in the N-terminal section; belongs to the DHBP synthase family. In the C-terminal section; belongs to the GTP cyclohydrolase II family. Mg(2+) serves as cofactor. Requires Mn(2+) as cofactor. It depends on Zn(2+) as a cofactor.

The enzyme catalyses D-ribulose 5-phosphate = (2S)-2-hydroxy-3-oxobutyl phosphate + formate + H(+). The catalysed reaction is GTP + 4 H2O = 2,5-diamino-6-hydroxy-4-(5-phosphoribosylamino)-pyrimidine + formate + 2 phosphate + 3 H(+). It functions in the pathway cofactor biosynthesis; riboflavin biosynthesis; 2-hydroxy-3-oxobutyl phosphate from D-ribulose 5-phosphate: step 1/1. It participates in cofactor biosynthesis; riboflavin biosynthesis; 5-amino-6-(D-ribitylamino)uracil from GTP: step 1/4. Its function is as follows. Catalyzes the conversion of D-ribulose 5-phosphate to formate and 3,4-dihydroxy-2-butanone 4-phosphate. Functionally, catalyzes the conversion of GTP to 2,5-diamino-6-ribosylamino-4(3H)-pyrimidinone 5'-phosphate (DARP), formate and pyrophosphate. The polypeptide is Riboflavin biosynthesis protein RibBA (Salinispora arenicola (strain CNS-205)).